The following is a 159-amino-acid chain: Ecotin (159 aa).

The first 22 residues, 1 to 22 (MRPTPLSTILALTMAATAPAMA), serve as a signal peptide directing secretion. Residues Cys-68 and Cys-105 are joined by a disulfide bond.

It belongs to the protease inhibitor I11 (ecotin) family. In terms of assembly, homodimer.

It is found in the periplasm. General inhibitor of family S1 serine proteases. This Pseudomonas putida (strain W619) protein is Ecotin.